A 312-amino-acid chain; its full sequence is Elongation factor Ts (312 aa).

The tract at residues 84 to 87 (TDFL) is involved in Mg(2+) ion dislocation from EF-Tu.

This sequence belongs to the EF-Ts family.

It localises to the cytoplasm. Its function is as follows. Associates with the EF-Tu.GDP complex and induces the exchange of GDP to GTP. It remains bound to the aminoacyl-tRNA.EF-Tu.GTP complex up to the GTP hydrolysis stage on the ribosome. This Caulobacter sp. (strain K31) protein is Elongation factor Ts.